The chain runs to 636 residues: 1-deoxy-D-xylulose-5-phosphate synthase (636 aa).

Thiamine diphosphate contacts are provided by residues histidine 72 and 113 to 115; that span reads GHA. Aspartate 144 provides a ligand contact to Mg(2+). Thiamine diphosphate-binding positions include 145–146, asparagine 174, tyrosine 287, and glutamate 370; that span reads GA. A Mg(2+)-binding site is contributed by asparagine 174.

This sequence belongs to the transketolase family. DXPS subfamily. Homodimer. Requires Mg(2+) as cofactor. Thiamine diphosphate serves as cofactor.

It catalyses the reaction D-glyceraldehyde 3-phosphate + pyruvate + H(+) = 1-deoxy-D-xylulose 5-phosphate + CO2. The protein operates within metabolic intermediate biosynthesis; 1-deoxy-D-xylulose 5-phosphate biosynthesis; 1-deoxy-D-xylulose 5-phosphate from D-glyceraldehyde 3-phosphate and pyruvate: step 1/1. Its function is as follows. Catalyzes the acyloin condensation reaction between C atoms 2 and 3 of pyruvate and glyceraldehyde 3-phosphate to yield 1-deoxy-D-xylulose-5-phosphate (DXP). This Rippkaea orientalis (strain PCC 8801 / RF-1) (Cyanothece sp. (strain PCC 8801)) protein is 1-deoxy-D-xylulose-5-phosphate synthase.